The primary structure comprises 246 residues: MHLPQMGYDRAITVFSPDGRLFQVEYAREAVKRGATAIGIKCKEGVILIADKRVGSKLLEADTIEKIYKIDEHICAATSGLVADARVLIDRARIEAQINRLTYDEPITVKELAKKICDFKQQYTQYGGVRPFGVSLLIAGVDEVPKLYETDPSGALLEYKATAIGMGRNAVTEFFEKEYRDDLSFDDAMVLGLVAMGLSIESELVPENIEVGYVKVDDRTFKEVSPEELKPYVERANERIRELLKK.

Belongs to the peptidase T1A family. In terms of assembly, the 20S proteasome core is composed of 14 alpha and 14 beta subunits that assemble into four stacked heptameric rings, resulting in a barrel-shaped structure. The two inner rings, each composed of seven catalytic beta subunits, are sandwiched by two outer rings, each composed of seven alpha subunits. The catalytic chamber with the active sites is on the inside of the barrel. Has probably a gated structure, the ends of the cylinder being occluded by the N-termini of the alpha-subunits. Is likely capped at one or both ends by the proteasome regulatory ATPase, PAN.

It is found in the cytoplasm. Its activity is regulated as follows. The formation of the proteasomal ATPase PAN-20S proteasome complex, via the docking of the C-termini of PAN into the intersubunit pockets in the alpha-rings, triggers opening of the gate for substrate entry. Interconversion between the open-gate and close-gate conformations leads to a dynamic regulation of the 20S proteasome proteolysis activity. Functionally, component of the proteasome core, a large protease complex with broad specificity involved in protein degradation. This is Proteasome subunit alpha from Archaeoglobus fulgidus (strain ATCC 49558 / DSM 4304 / JCM 9628 / NBRC 100126 / VC-16).